The sequence spans 257 residues: Deoxyribose-phosphate aldolase (257 aa).

Aspartate 102 functions as the Proton donor/acceptor in the catalytic mechanism. Lysine 166 serves as the catalytic Schiff-base intermediate with acetaldehyde. The active-site Proton donor/acceptor is the lysine 198.

Belongs to the DeoC/FbaB aldolase family. DeoC type 2 subfamily.

Its subcellular location is the cytoplasm. The enzyme catalyses 2-deoxy-D-ribose 5-phosphate = D-glyceraldehyde 3-phosphate + acetaldehyde. The protein operates within carbohydrate degradation; 2-deoxy-D-ribose 1-phosphate degradation; D-glyceraldehyde 3-phosphate and acetaldehyde from 2-deoxy-alpha-D-ribose 1-phosphate: step 2/2. Its function is as follows. Catalyzes a reversible aldol reaction between acetaldehyde and D-glyceraldehyde 3-phosphate to generate 2-deoxy-D-ribose 5-phosphate. This chain is Deoxyribose-phosphate aldolase, found in Shewanella woodyi (strain ATCC 51908 / MS32).